We begin with the raw amino-acid sequence, 220 residues long: Iron-sulfur cluster repair protein YtfE (220 aa).

It belongs to the RIC family. YtfE subfamily. Homodimer.

The protein resides in the cytoplasm. Functionally, di-iron-containing protein involved in the repair of iron-sulfur clusters damaged by oxidative and nitrosative stress conditions. This is Iron-sulfur cluster repair protein YtfE from Salmonella choleraesuis (strain SC-B67).